The primary structure comprises 211 residues: MFSTFLTALRTCVVTMVLTGLLYPLAVTGLAQLLFPGEANGSWVKDGRGRVVGSALIGQGFTRAGYFHPRPSAAGAGYDGAASSGSNLGPTSLKLKERAAAELERLRRENPDAAGPVPAELVTTSASGLDPHLSPEAARWQAARVARARGVALERVLDVVDARVEGRTFGVLGEPRVNVLLLNLALDRRFGPLPDAAPGVGGRASPGQGAP.

The chain crosses the membrane as a helical span at residues 13–35; that stretch reads VVTMVLTGLLYPLAVTGLAQLLF.

It belongs to the KdpC family. As to quaternary structure, the system is composed of three essential subunits: KdpA, KdpB and KdpC.

The protein resides in the cell inner membrane. Functionally, part of the high-affinity ATP-driven potassium transport (or Kdp) system, which catalyzes the hydrolysis of ATP coupled with the electrogenic transport of potassium into the cytoplasm. This subunit acts as a catalytic chaperone that increases the ATP-binding affinity of the ATP-hydrolyzing subunit KdpB by the formation of a transient KdpB/KdpC/ATP ternary complex. In Myxococcus xanthus (strain DK1622), this protein is Potassium-transporting ATPase KdpC subunit.